The sequence spans 283 residues: MDSRFVTYFASAISASVLVTTIFVCWNVTHDLNTLQAMSDRNMQDFKAISDRTWDKMMFKQQSSPPSPSLIFGRNKRSGDKCNCSEEPSNCPGGPPGPPGEKGNDGVDGVDGIPGFPGENGGAALDQPADGTCIKCPPGPRGPPGPQGEEGPSGDVGEDGEPGVPGNDGADGTPGKSGAPGGKGPQGPPGTPGRPGQPGRKAIGEAGPKGPPGAPGTDGRRGENGTDGDDGVDGQPGDEGDAGKDGTPGEPGPQGEQGTEGQPGTDGAYCPCPARSISKVAIQ.

The segment at 59–283 (FKQQSSPPSP…ARSISKVAIQ (225 aa)) is disordered. 3 triple-helical region regions span residues 94-122 (GPPG…ENGG), 139-201 (GPRG…PGRK), and 204-269 (GEAG…DGAY). The span at 137–146 (PPGPRGPPGP) shows a compositional bias: pro residues. Positions 226-240 (TDGDDGVDGQPGDEG) are enriched in acidic residues. The segment covering 253–265 (PQGEQGTEGQPGT) has biased composition (low complexity).

This sequence belongs to the cuticular collagen family. In terms of assembly, collagen polypeptide chains are complexed within the cuticle by disulfide bonds and other types of covalent cross-links.

In terms of biological role, nematode cuticles are composed largely of collagen-like proteins. The cuticle functions both as an exoskeleton and as a barrier to protect the worm from its environment. This chain is Putative cuticle collagen 79 (col-79), found in Caenorhabditis elegans.